The chain runs to 106 residues: UPF0060 membrane protein R01043 (106 aa).

4 helical membrane-spanning segments follow: residues 5–25 (AIYFLAALAEITGCFAFWSWL), 31–51 (ALWLIPGMASLALFAWLLTMV), 61–81 (AAYGGVYIVASLSWLWLAEGV), and 85–105 (HWDMTGAAVALAGSAIILAGP).

This sequence belongs to the UPF0060 family.

It is found in the cell inner membrane. The sequence is that of UPF0060 membrane protein R01043 from Rhizobium meliloti (strain 1021) (Ensifer meliloti).